The chain runs to 187 residues: Pumilio homolog 26 (187 aa).

Residues 20-42 (VATEFLRVSNDVAELHKLSSKLT) form a Pumilio 1; degenerate repeat. One copy of the Pumilio 2; degenerate repeat lies at 43–78 (SDPYLFVEFVKTIRGFLSVQTALGLSGEIDTVFLQV). One copy of the Pumilio 3; degenerate repeat lies at 79–116 (IKGWFPDLITETFSFLIVVRIINLFNKRANSKVYPDIL). The stretch at 117 to 154 (RRIGNNALYLTRNPLRGICLVEKAINVRDPDCTVFIAL) is one Pumilio 4; degenerate repeat. Residues 155–187 (KLHSHYVELSFEELGSNIVEKLLSVGESGICGV) form a Pumilio 5 repeat.

It localises to the cytoplasm. Sequence-specific RNA-binding protein that regulates translation and mRNA stability by binding the 3'-UTR of target mRNAs. The protein is Pumilio homolog 26 (APUM26) of Arabidopsis thaliana (Mouse-ear cress).